Reading from the N-terminus, the 72-residue chain is MSLSFSLIVFAVGVAVSIGVLTLTTQQSSSYCLILVDGAKAVVEGCHLRQDIPAILSELKPASSPFNPLFCS.

The Lumenal portion of the chain corresponds to 1–2; the sequence is MS. Residues 3-23 traverse the membrane as a helical segment; that stretch reads LSFSLIVFAVGVAVSIGVLTL. Residues 24–72 are Cytoplasmic-facing; the sequence is TTQQSSSYCLILVDGAKAVVEGCHLRQDIPAILSELKPASSPFNPLFCS.

Belongs to the Tymovirales TGBp3 protein family.

Its subcellular location is the host endoplasmic reticulum membrane. In terms of biological role, plays a role in viral cell-to-cell propagation, by facilitating genome transport to neighboring plant cells through plasmosdesmata. May induce the formation of granular vesicles derived from the Endoplasmic reticulum, which align on actin filaments. The polypeptide is Movement protein TGBp3 (ORF4) (Lolium latent virus (isolate Lolium/USA/US1/-) (LoLV)).